Here is a 1488-residue protein sequence, read N- to C-terminus: Chromosome partition protein MukB (1488 aa).

An ATP-binding site is contributed by Gly-34–Ser-41. Coiled coils occupy residues Leu-326–Gln-418, Leu-444–His-472, and Arg-509–Pro-602. Residues Pro-666–Arg-783 are flexible hinge. Coiled-coil stretches lie at residues Glu-835–Glu-923, Glu-977–Gly-1116, and Val-1209–Val-1265. Positions Ala-1049–Arg-1074 are disordered. Positions Ser-1051 to His-1065 are enriched in basic and acidic residues.

Belongs to the SMC family. MukB subfamily. In terms of assembly, homodimerization via its hinge domain. Binds to DNA via its C-terminal region. Interacts, and probably forms a ternary complex, with MukE and MukF via its C-terminal region. The complex formation is stimulated by calcium or magnesium. Interacts with tubulin-related protein FtsZ.

The protein localises to the cytoplasm. The protein resides in the nucleoid. Plays a central role in chromosome condensation, segregation and cell cycle progression. Functions as a homodimer, which is essential for chromosome partition. Involved in negative DNA supercoiling in vivo, and by this means organize and compact chromosomes. May achieve or facilitate chromosome segregation by condensation DNA from both sides of a centrally located replisome during cell division. This Salmonella typhi protein is Chromosome partition protein MukB.